A 201-amino-acid polypeptide reads, in one-letter code: Orotate phosphoribosyltransferase (201 aa).

5-phospho-alpha-D-ribose 1-diphosphate-binding positions include Lys-90 and 113 to 121 (EDIITTGGS). Thr-117 and Arg-145 together coordinate orotate.

Belongs to the purine/pyrimidine phosphoribosyltransferase family. PyrE subfamily. In terms of assembly, homodimer. The cofactor is Mg(2+).

The enzyme catalyses orotidine 5'-phosphate + diphosphate = orotate + 5-phospho-alpha-D-ribose 1-diphosphate. Its pathway is pyrimidine metabolism; UMP biosynthesis via de novo pathway; UMP from orotate: step 1/2. Its function is as follows. Catalyzes the transfer of a ribosyl phosphate group from 5-phosphoribose 1-diphosphate to orotate, leading to the formation of orotidine monophosphate (OMP). The polypeptide is Orotate phosphoribosyltransferase (Sulfurovum sp. (strain NBC37-1)).